Reading from the N-terminus, the 176-residue chain is PPE family protein PPE57 (176 aa).

This sequence belongs to the mycobacterial PPE family. Interacts with human TLR2.

Its subcellular location is the secreted. It localises to the cell wall. It is found in the cell surface. Plays a key role in regulating innate and adaptive immune responses through human Toll-like receptor 2 (TLR2). Interacts with TLR2, leading to the subsequent activation of the mitogen-activated protein kinase (MAPK) and nuclear factor kappa B (NF-kappa-B) signaling pathways. Induces macrophage activation by augmenting the expression of several cell surface molecules (CD40, CD80, CD86 and MHC class II) and pro-inflammatory cytokines (TNF-alpha, IL-6 and IL-12p40) within macrophages. Also participates in adaptive immunity by directing Th1-polarised immune responses. Stimulates specific humoral and cellular immune responses in tuberculosis (TB) patients. Induces a strong IgG(1) antibody response and an increased Th1/Th2 type immune response in mice. The polypeptide is PPE family protein PPE57 (Mycobacterium tuberculosis (strain ATCC 25618 / H37Rv)).